The following is a 146-amino-acid chain: UPF0178 protein BCQ_2874 (146 aa).

Belongs to the UPF0178 family.

The polypeptide is UPF0178 protein BCQ_2874 (Bacillus cereus (strain Q1)).